We begin with the raw amino-acid sequence, 495 residues long: UDP-N-acetylmuramoyl-L-alanyl-D-glutamate--2,6-diaminopimelate ligase (495 aa).

UDP-N-acetyl-alpha-D-muramoyl-L-alanyl-D-glutamate is bound by residues L27, S29, and 44 to 46; that span reads HQA. 116–122 lines the ATP pocket; sequence GTNGKTT. UDP-N-acetyl-alpha-D-muramoyl-L-alanyl-D-glutamate-binding positions include N157, 158-159, S185, Q191, and R193; that span reads TT. The residue at position 225 (K225) is an N6-carboxylysine. Residues R390, 414–417, G465, and E469 each bind meso-2,6-diaminopimelate; that span reads DNPR. The Meso-diaminopimelate recognition motif signature appears at 414-417; it reads DNPR.

It belongs to the MurCDEF family. MurE subfamily. Mg(2+) serves as cofactor. Carboxylation is probably crucial for Mg(2+) binding and, consequently, for the gamma-phosphate positioning of ATP.

Its subcellular location is the cytoplasm. The catalysed reaction is UDP-N-acetyl-alpha-D-muramoyl-L-alanyl-D-glutamate + meso-2,6-diaminopimelate + ATP = UDP-N-acetyl-alpha-D-muramoyl-L-alanyl-gamma-D-glutamyl-meso-2,6-diaminopimelate + ADP + phosphate + H(+). It functions in the pathway cell wall biogenesis; peptidoglycan biosynthesis. Catalyzes the addition of meso-diaminopimelic acid to the nucleotide precursor UDP-N-acetylmuramoyl-L-alanyl-D-glutamate (UMAG) in the biosynthesis of bacterial cell-wall peptidoglycan. In Escherichia coli O157:H7, this protein is UDP-N-acetylmuramoyl-L-alanyl-D-glutamate--2,6-diaminopimelate ligase.